We begin with the raw amino-acid sequence, 780 residues long: MKFTEGMWLLREGIRIDWMSNVERLNVDKDTVNLLLNKFQRHRGDTLNSSTVSARVTSPLEGIIGVKLVHWAGGLDNGPHYELNTSAGHTEITHEKGKNLKYTSGRLELDINIAPNELAFTFTTGADGQDKRKKLTGHSFRSIGYVGDSTTPKSQLSDGIFYERQGYTLAELDLSVGEKLYGLGERFGPFVKNGQSVNIWNEDGGTSSELAYKNIPFYISSNGYGVFVNHPGKVSLELQSERTTRVNVSVEGEELEYFVIEGKNPKEILKRWTDLTGKPALVPAWSYGLWLTTSFTTNYSERTVTGFLDGFKDRNLPLSVFHFDCFWMKSYQWCDFEFDADMFPDAAGYLARLKERGLKLSIWINPYVGQASPLFEIGKREGYFIKRIDGSVWQWDLWQAGMAVVDFTNPAACSWYTGHLKRLMDLGIDTFKTDFAERIPFKNITYHDGSDPARMHNYYALLYNKVVYETMTSISGKSNSLLFARSTSVGGQKYPVHWGGDCESTYEAMAESLRGGLSLGLAGYIFWASDIGGFEGTPPPALYKRWVQFGLLSSHSRLHGSSSFRVPWIYGEDCSDVLRDCVKRKISLTPYLLAEALNGHRSGTPLMRPMFMEFPEDLNTYPLDTQYMFGSNLLVAPVFSDEGIVTFYVPRTPEEEGRKQWISWFDHGKKYEGGRWYTETHGFDTLPILIRPGSVTPINYKLEKPEGNPLDGLEILVNGSIDKEVEIEIVDPETTHKVLKVMTVSERETENGVEVIARLDGVDGNENSVKVNWVGHGVTK.

Asn48, Asn84, Asn247, and Asn298 each carry an N-linked (GlcNAc...) asparagine glycan. Active-site residues include Asp434 and Glu437. N-linked (GlcNAc...) asparagine glycosylation occurs at Asn443. Asp501 functions as the Proton donor in the catalytic mechanism. An N-linked (GlcNAc...) asparagine glycan is attached at Asn718.

This sequence belongs to the glycosyl hydrolase 31 family.

It localises to the secreted. The enzyme catalyses Hydrolysis of terminal, non-reducing alpha-D-xylose residues with release of alpha-D-xylose.. Functionally, catalyzes the liberation of alpha-xylose from the non-reducing terminal glucose of xyloglucan oligosaccharides. This is Alpha-xylosidase from Emericella nidulans (strain FGSC A4 / ATCC 38163 / CBS 112.46 / NRRL 194 / M139) (Aspergillus nidulans).